A 272-amino-acid chain; its full sequence is 27-O-demethylrifamycin SV methyltransferase (272 aa).

Residues Ser-89, Gln-94, 117–118 (DA), Leu-134, and His-139 each bind S-adenosyl-L-methionine.

Belongs to the class I-like SAM-binding methyltransferase superfamily. Exists probably as a trimer.

The enzyme catalyses 27-O-demethylrifamycin SV + S-adenosyl-L-methionine = rifamycin SV + S-adenosyl-L-homocysteine + H(+). Its pathway is antibiotic biosynthesis; rifamycin B biosynthesis. Slightly inhibited by Ca(2+) and Mg(2+). Strongly inhibited by Zn(2+), Ni(2+) and Co(2+). Its function is as follows. Catalyzes the methylation of 27-O-demethylrifamycin SV (DMRSV) to rifamycin SV. The protein is 27-O-demethylrifamycin SV methyltransferase of Amycolatopsis mediterranei (strain S699) (Nocardia mediterranei).